The following is a 260-amino-acid chain: MNFEKIIEEKVNQKLKELRLKNSLEILEKLDINTELKEALKSTLLKRLNGEKEFYKISIDKKPKAVVAFSGGVDSSTSAIIAKQIFDVKAVSCYSKYIMTDEMRENAKNIAKKIGISLEFVSIDLEEVYKGVVNGKFHPCGRCHKVIENAVIDYAKKIDAEFVIFGDLLAFGYLALYREDEIFRFNLPSFFALTKDEEREILKNNGIELKMSYGCPLLKIYHKHNKGYKFTIQRILREVRGRVVNEEEGFKNIVEILNQQ.

This is an uncharacterized protein from Methanocaldococcus jannaschii (strain ATCC 43067 / DSM 2661 / JAL-1 / JCM 10045 / NBRC 100440) (Methanococcus jannaschii).